Reading from the N-terminus, the 161-residue chain is Negative cofactor 2 complex subunit beta (161 aa).

One can recognise a Histone-fold domain in the interval 11–75 (SLPKATVQKM…IAAEHIIKAL (65 aa)). Residues 93–107 (EHKEQQKNREKKSSK) are compositionally biased toward basic and acidic residues. Disordered regions lie at residues 93-116 (EHKE…VSRD) and 130-161 (RERF…TKEN). Over residues 135–147 (NQNIAHDNHTTTA) the composition is skewed to polar residues.

It belongs to the NC2 beta/DR1 family.

The protein localises to the cytoplasm. Its subcellular location is the nucleus. This Schizosaccharomyces pombe (strain 972 / ATCC 24843) (Fission yeast) protein is Negative cofactor 2 complex subunit beta (ncb2).